Reading from the N-terminus, the 64-residue chain is Large ribosomal subunit protein bL35 (64 aa).

The span at 1–26 (MPKMKSHRGASKRFKRTASGKLKRGR) shows a compositional bias: basic residues. 2 disordered regions span residues 1 to 28 (MPKM…GRAY) and 33 to 52 (FGNK…MVSS).

It belongs to the bacterial ribosomal protein bL35 family.

This Exiguobacterium sibiricum (strain DSM 17290 / CCUG 55495 / CIP 109462 / JCM 13490 / 255-15) protein is Large ribosomal subunit protein bL35.